The primary structure comprises 129 residues: Serum amyloid A-2 protein (129 aa).

An N-terminal signal peptide occupies residues 1 to 18 (MKLFTGLIFCSLVLGVSS). Q19 carries the pyrrolidone carboxylic acid modification. A disordered region spans residues 92–129 (GDSGHGVEDSKADQAANEWGRSGKDPNHFRPSGLPDKY).

This sequence belongs to the SAA family. In terms of assembly, apolipoprotein of the HDL complex. As to expression, expressed by the liver; secreted in plasma.

The protein resides in the secreted. In terms of biological role, major acute phase reactant. The polypeptide is Serum amyloid A-2 protein (SAA2P0DJI9) (Neovison vison (American mink)).